The primary structure comprises 562 residues: Arginine--tRNA ligase 1 (562 aa).

The 'HIGH' region signature appears at 122 to 132 (PNIAKPFSMGH).

This sequence belongs to the class-I aminoacyl-tRNA synthetase family. Monomer.

It localises to the cytoplasm. The catalysed reaction is tRNA(Arg) + L-arginine + ATP = L-arginyl-tRNA(Arg) + AMP + diphosphate. The chain is Arginine--tRNA ligase 1 from Bacillus thuringiensis subsp. konkukian (strain 97-27).